The primary structure comprises 421 residues: uncharacterized protein (421 aa).

This is an uncharacterized protein from Acanthamoeba polyphaga (Amoeba).